We begin with the raw amino-acid sequence, 206 residues long: Large ribosomal subunit protein uL4 (206 aa).

A disordered region spans residues 63–93 (MYKQKGTGRARHHSARAPQFRGGGKAHGPVV). Positions 64–77 (YKQKGTGRARHHSA) are enriched in basic residues.

This sequence belongs to the universal ribosomal protein uL4 family. As to quaternary structure, part of the 50S ribosomal subunit.

One of the primary rRNA binding proteins, this protein initially binds near the 5'-end of the 23S rRNA. It is important during the early stages of 50S assembly. It makes multiple contacts with different domains of the 23S rRNA in the assembled 50S subunit and ribosome. In terms of biological role, forms part of the polypeptide exit tunnel. The chain is Large ribosomal subunit protein uL4 from Sinorhizobium medicae (strain WSM419) (Ensifer medicae).